The primary structure comprises 375 residues: AT-rich binding protein (375 aa).

The C2H2-type 1 zinc finger occupies 29-52 (IVCHTCQEELQTQDQFWKHIQDEH). Residues 110 to 119 (DDQREMDIHE) are compositionally biased toward basic and acidic residues. The tract at residues 110–142 (DDQREMDIHEAQQQQHQQQQQHQQQQQLQQQQQ) is disordered. Residues 121–142 (QQQQHQQQQQHQQQQQLQQQQQ) show a composition bias toward low complexity. 2 C2H2-type zinc fingers span residues 308-332 (YICD…RVVH) and 338-361 (FNCE…KKKH).

It is found in the nucleus. May be a transcription factor for genes having (A+T) stretches in their promoter and/or enhancer regions. Binds to AT rich DNA. This Drosophila pseudoobscura pseudoobscura (Fruit fly) protein is AT-rich binding protein.